We begin with the raw amino-acid sequence, 1881 residues long: Endoribonuclease Dicer-S (1881 aa).

In terms of domain architecture, Helicase ATP-binding spans 41-217; sequence LLEAALDHNI…DLEEKIQNLE (177 aa). Residue 54-61 participates in ATP binding; sequence LNSGSGKT. The DECH box motif lies at 165-168; the sequence is DECH. The 170-residue stretch at 425 to 594 folds into the Helicase C-terminal domain; that stretch reads SFPSPFTNIL…SMDCGNTESE (170 aa). Residues 622–714 form the Dicer dsRNA-binding fold domain; it reads AIGHINRYCA…MPVGKETVKY (93 aa). The region spanning 887-1034 is the PAZ domain; that stretch reads KFVEDIEKSE…LVPELCAIHP (148 aa). 2 RNase III domains span residues 1249-1380 and 1625-1783; these read TSDI…ETSG and FENF…MDSG. Residues Glu1293, Asp1371, Glu1374, Glu1664, Asp1769, and Glu1772 each contribute to the Mg(2+) site. Positions 1808-1873 constitute a DRBM domain; that stretch reads VPRSPVRELL…ARRALRSLKA (66 aa).

This sequence belongs to the helicase family. Dicer subfamily. Component of the RISC loading complex (RLC), or micro-RNA (miRNA) loading complex (miRLC), which is composed of dicer1, ago2 and tarbp2; dicer1 and tarbp2 are required to process precursor miRNAs (pre-miRNAs) to mature miRNAs and then load them onto ago2. Note that the trimeric RLC/miRLC is also referred to as RISC. Mg(2+) is required as a cofactor. Requires Mn(2+) as cofactor.

The protein resides in the cytoplasm. It catalyses the reaction Endonucleolytic cleavage to 5'-phosphomonoester.. Its function is as follows. Double-stranded RNA (dsRNA) endoribonuclease playing a central role in short dsRNA-mediated post-transcriptional gene silencing. Cleaves naturally occurring long dsRNAs and short hairpin pre-microRNAs (miRNA) into fragments of twenty-one to twenty-three nucleotides with 3' overhang of two nucleotides, producing respectively short interfering RNAs (siRNA) and mature microRNAs. SiRNAs and miRNAs serve as guide to direct the RNA-induced silencing complex (RISC) to complementary RNAs to degrade them or prevent their translation. Gene silencing mediated by siRNAs, also called RNA interference, controls the elimination of transcripts from mobile and repetitive DNA elements of the genome but also the degradation of exogenous RNA of viral origin for instance. The miRNA pathway on the other side is a mean to specifically regulate the expression of target genes. During embryonic development, at the left-right organizer, post-transcriptionally regulates the expression of dand5 in flow sensor cells. In post-flow stages, acts along with Bicc1 to repress dand5 mRNA translation and decay. Decreased Dand5 expression lifts repression of Nodal and defines leftness by induction of the lateral plate mesoderm Nodal signaling cascade. The polypeptide is Endoribonuclease Dicer-S (dicer1.S) (Xenopus laevis (African clawed frog)).